The sequence spans 492 residues: N-succinylglutamate 5-semialdehyde dehydrogenase (492 aa).

225 to 230 (GSSNTG) contributes to the NAD(+) binding site. Residues Glu248 and Cys282 contribute to the active site.

This sequence belongs to the aldehyde dehydrogenase family. AstD subfamily.

The enzyme catalyses N-succinyl-L-glutamate 5-semialdehyde + NAD(+) + H2O = N-succinyl-L-glutamate + NADH + 2 H(+). Its pathway is amino-acid degradation; L-arginine degradation via AST pathway; L-glutamate and succinate from L-arginine: step 4/5. In terms of biological role, catalyzes the NAD-dependent reduction of succinylglutamate semialdehyde into succinylglutamate. The chain is N-succinylglutamate 5-semialdehyde dehydrogenase from Colwellia psychrerythraea (strain 34H / ATCC BAA-681) (Vibrio psychroerythus).